The chain runs to 329 residues: IDS-like terpene synthase 1 (329 aa).

Positions 79 and 83 each coordinate Mg(2+).

The protein belongs to the FPP/GGPP synthase family. Mg(2+) is required as a cofactor.

The catalysed reaction is (2E)-geranyl diphosphate + H2O = linalool + diphosphate. It catalyses the reaction (2E,6E)-farnesyl diphosphate + H2O = (6E)-nerolidol + diphosphate. In terms of biological role, terpene synthase that shows monoterpene synthase activity and produces linalool, using geranyl diphosphate (GPP) as substrate. Also shows sesquiterpene synthase activity as it is able to convert farnesyl diphosphate (FPP) into (E)-nerolidol. The sequence is that of IDS-like terpene synthase 1 from Melampsora lini (Rust fungus).